The chain runs to 187 residues: Insulin-like growth factor 2 (187 aa).

The first 23 residues, 1–23 (MCAARQILLLLLAFLAYALDSAA), serve as a signal peptide directing secretion. The b stretch occupies residues 25-51 (YGTAETLCGGELVDTLQFVCGDRGFYF). Disulfide bonds link Cys-32–Cys-71, Cys-44–Cys-84, and Cys-70–Cys-75. Positions 52-64 (SRPVGRNNRRINR) are c. The a stretch occupies residues 64 to 85 (RGIVEECCFRSCDLALLETYCA). A d region spans residues 86–91 (KSVKSE). Residues 92–187 (RDLSATSLAG…ASPEATGPQE (96 aa)) constitute a propeptide, e peptide. Positions 162 to 187 (HRPLISLPSQRPPAPRASPEATGPQE) are disordered.

The protein belongs to the insulin family.

The protein localises to the secreted. Its function is as follows. The insulin-like growth factors, isolated from plasma, are structurally and functionally related to insulin but have a much higher growth-promoting activity. Acts as a ligand for integrin which is required for IGF2 signaling. This Gallus gallus (Chicken) protein is Insulin-like growth factor 2.